The sequence spans 330 residues: ADP-L-glycero-D-manno-heptose-6-epimerase (330 aa).

Residues 11–12, 32–33, lysine 39, lysine 54, 75–79, and asparagine 92 each bind NADP(+); these read FI, DN, and EGACS. The active-site Proton acceptor is tyrosine 139. Lysine 143 is a binding site for NADP(+). Asparagine 168 contacts substrate. NADP(+) contacts are provided by valine 169 and lysine 177. Catalysis depends on lysine 177, which acts as the Proton acceptor. Residues arginine 179, histidine 186, 200 to 203, arginine 213, and tyrosine 292 each bind substrate; that span reads FGEY.

Belongs to the NAD(P)-dependent epimerase/dehydratase family. HldD subfamily. As to quaternary structure, homopentamer. NADP(+) is required as a cofactor.

The enzyme catalyses ADP-D-glycero-beta-D-manno-heptose = ADP-L-glycero-beta-D-manno-heptose. It participates in nucleotide-sugar biosynthesis; ADP-L-glycero-beta-D-manno-heptose biosynthesis; ADP-L-glycero-beta-D-manno-heptose from D-glycero-beta-D-manno-heptose 7-phosphate: step 4/4. Catalyzes the interconversion between ADP-D-glycero-beta-D-manno-heptose and ADP-L-glycero-beta-D-manno-heptose via an epimerization at carbon 6 of the heptose. The chain is ADP-L-glycero-D-manno-heptose-6-epimerase from Burkholderia cenocepacia (strain HI2424).